The primary structure comprises 158 residues: Ribonucleases P/MRP protein subunit POP6 (158 aa).

Residues 51–71 are a coiled coil; it reads KNDNIKKSVNKLDKQINMADR.

Component of nuclear RNase P and RNase MRP complexes. RNase P consists of an RNA moiety and at least 9 protein subunits including POP1, POP3, POP4, POP5, POP6, POP7, POP8, RPP1 and RPR2. RNase MRP complex consists of an RNA moiety and at least 10 protein subunits including POP1, POP3, POP4, POP5, POP6, POP7, POP8, RMP1, RPP1 and SNM1, many of which are shared with the RNase P complex.

It is found in the nucleus. It catalyses the reaction Endonucleolytic cleavage of RNA, removing 5'-extranucleotides from tRNA precursor.. Its function is as follows. Component of ribonuclease P, a protein complex that generates mature tRNA molecules by cleaving their 5'-ends. Also a component of RNase MRP, which cleaves pre-rRNA sequences. The polypeptide is Ribonucleases P/MRP protein subunit POP6 (POP6) (Saccharomyces cerevisiae (strain ATCC 204508 / S288c) (Baker's yeast)).